A 229-amino-acid chain; its full sequence is MAKKKAFIPFFYFTSIVFLPWLISLCCNKSLKTWITNWWNTRQCETFLNDIQEKSVLEKFIQLEDLFQLDEMIKEYTETDLQQFRLGIHKETIQFIKIHNEYRIHTILHFSTNLISFVILSGYSFWGKEKLFILNSWVQEFLYNLSDTIKAFSILLLTDLCIGFHSPHGWELMIGYIYKDFGFAHYEQILSGLVSTFPVILDTIFKYWIFRYLNRVSPSLVVIYHAIND.

3 helical membrane passes run 6 to 26 (AFIP…ISLC), 107 to 127 (ILHF…SFWG), and 189 to 209 (ILSG…KYWI).

Belongs to the CemA family.

It is found in the plastid. Its subcellular location is the chloroplast inner membrane. The catalysed reaction is K(+)(in) + H(+)(out) = K(+)(out) + H(+)(in). In terms of biological role, contributes to K(+)/H(+) antiport activity by supporting proton efflux to control proton extrusion and homeostasis in chloroplasts in a light-dependent manner to modulate photosynthesis. Prevents excessive induction of non-photochemical quenching (NPQ) under continuous-light conditions. Indirectly promotes efficient inorganic carbon uptake into chloroplasts. The chain is Potassium/proton antiporter CemA from Nasturtium officinale (Watercress).